The primary structure comprises 625 residues: tRNA uridine 5-carboxymethylaminomethyl modification enzyme MnmG (625 aa).

11-16 serves as a coordination point for FAD; the sequence is GAGHAG. 271-285 provides a ligand contact to NAD(+); it reads GPRYCPSIETKIVTF.

Belongs to the MnmG family. As to quaternary structure, homodimer. Heterotetramer of two MnmE and two MnmG subunits. FAD is required as a cofactor.

The protein resides in the cytoplasm. In terms of biological role, NAD-binding protein involved in the addition of a carboxymethylaminomethyl (cmnm) group at the wobble position (U34) of certain tRNAs, forming tRNA-cmnm(5)s(2)U34. In Porphyromonas gingivalis (strain ATCC BAA-308 / W83), this protein is tRNA uridine 5-carboxymethylaminomethyl modification enzyme MnmG.